A 318-amino-acid polypeptide reads, in one-letter code: MAGLKRRASQVWPEERGEQEHGLYSLHRMFDIVGTHLTHRDVRVLSFLFVDVIDDHERGLIRNGRDFLLALERQGRCDESNFRQVLQLLRIITRHDLLPYVTLKKRRAVCPDLVDKYLEETSIRYVTPRALSDPEPRPPQPSKTVPPHYPVVCCPTSGSQMCSKRPARGRTTLGSQRKRRKSVTPDPKEKQTCDIRLRVRAEYCQHETALQGNVFSNKQDPLERQFERFNQANTILKSRDLGSIICDIKFSELTYLDAFWRDYINGSLLEALKGVFITDSLKQAVGHEAIKLLVNVDEEDYELGRQKLLRNLMLQALP.

Residues 25–103 (SLHRMFDIVG…RHDLLPYVTL (79 aa)) enclose the DED domain. Residues 128–191 (PRALSDPEPR…SVTPDPKEKQ (64 aa)) are disordered.

Interacts with CASP8, CASP10, KRT8, KRT18, CASP3 and FADD. Homodimerizes and heterodimerizes with DEDD2. Exists predominantly in a mono- or diubiquitinated form. In terms of tissue distribution, ubiquitously expressed.

It localises to the cytoplasm. The protein localises to the nucleus. It is found in the nucleolus. In terms of biological role, a scaffold protein that directs CASP3 to certain substrates and facilitates their ordered degradation during apoptosis. May also play a role in mediating CASP3 cleavage of KRT18. Regulates degradation of intermediate filaments during apoptosis. May play a role in the general transcription machinery in the nucleus and might be an important regulator of the activity of GTF3C3. Inhibits DNA transcription in vitro. This is Death effector domain-containing protein (Dedd) from Mus musculus (Mouse).